The following is a 365-amino-acid chain: Alanine racemase (365 aa).

Lysine 32 acts as the Proton acceptor; specific for D-alanine in catalysis. Lysine 32 is subject to N6-(pyridoxal phosphate)lysine. Arginine 128 serves as a coordination point for substrate. The Proton acceptor; specific for L-alanine role is filled by tyrosine 257. Residue methionine 305 coordinates substrate.

Belongs to the alanine racemase family. Requires pyridoxal 5'-phosphate as cofactor.

The catalysed reaction is L-alanine = D-alanine. Its pathway is amino-acid biosynthesis; D-alanine biosynthesis; D-alanine from L-alanine: step 1/1. Its function is as follows. Catalyzes the interconversion of L-alanine and D-alanine. May also act on other amino acids. This is Alanine racemase (alr) from Francisella tularensis subsp. novicida (strain U112).